Here is a 238-residue protein sequence, read N- to C-terminus: Probable tetraspanin tspC (238 aa).

Residues 1–16 lie on the Cytoplasmic side of the membrane; it reads MVNTRDFLPKTTHYLK. A helical transmembrane segment spans residues 17 to 37; it reads VPIIGLNAILWLLGLVLIVVG. At 38-69 the chain is on the extracellular side; sequence SVCISFFSNFKEFTKESGYKNALSNLTTSAPT. Residue Asn62 is glycosylated (N-linked (GlcNAc...) asparagine). The helical transmembrane segment at 70-90 threads the bilayer; sequence GVLVIGIFFILLTLVGCFVAY. At 91-93 the chain is on the cytoplasmic side; the sequence is KEK. A helical transmembrane segment spans residues 94–114; it reads LVGLVLYTMLMLILLVVLIGI. The Extracellular portion of the chain corresponds to 115-197; sequence GGKALTLDKE…GIFTKQVSSK (83 aa). N-linked (GlcNAc...) asparagine glycans are attached at residues Asn143 and Asn164. A helical transmembrane segment spans residues 198–218; sequence LVLVGIAGVVIGCIEFVAMAL. Over 219 to 238 the chain is Cytoplasmic; it reads SLFLIIRICRSPRSRAYDQY.

This sequence belongs to the tetraspanin (TM4SF) family.

The protein localises to the membrane. This chain is Probable tetraspanin tspC (tspC), found in Dictyostelium discoideum (Social amoeba).